We begin with the raw amino-acid sequence, 563 residues long: NAD-dependent malic enzyme (563 aa).

Tyr101 functions as the Proton donor in the catalytic mechanism. Arg154 contacts NAD(+). The active-site Proton acceptor is the Lys172. Residues Glu243, Asp244, and Asp267 each coordinate a divalent metal cation. NAD(+) contacts are provided by Asp267 and Asn416.

This sequence belongs to the malic enzymes family. Homotetramer. The cofactor is Mg(2+). Mn(2+) is required as a cofactor.

The catalysed reaction is (S)-malate + NAD(+) = pyruvate + CO2 + NADH. The enzyme catalyses oxaloacetate + H(+) = pyruvate + CO2. The protein is NAD-dependent malic enzyme of Pseudomonas savastanoi pv. phaseolicola (strain 1448A / Race 6) (Pseudomonas syringae pv. phaseolicola (strain 1448A / Race 6)).